The chain runs to 476 residues: Zinc metalloproteinase/disintegrin (476 aa).

Residues 1 to 20 (MIQVLLVTICLAAFPYQGSS) form the signal peptide. Positions 21–192 (IILESGNVND…ASQSNLTPEQ (172 aa)) are excised as a propeptide. A Pyrrolidone carboxylic acid modification is found at Q193. A Peptidase M12B domain is found at 198-393 (RYIELAVVAD…HNPQCILNKP (196 aa)). Residues E201 and D285 each contribute to the Ca(2+) site. 3 cysteine pairs are disulfide-bonded: C309–C388, C348–C372, and C350–C355. H334 is a Zn(2+) binding site. The active site involves E335. The Zn(2+) site is built by H338 and H344. Positions 388 and 391 each coordinate Ca(2+). Positions 394–403 (LTTVSGNELL) are excised as a propeptide. One can recognise a Disintegrin domain in the interval 395 to 476 (TTVSGNELLE…ADCPRNRFHA (82 aa)). 6 disulfides stabilise this stretch: C409–C424, C411–C419, C418–C441, C432–C438, C437–C462, and C450–C469. A Cell attachment site motif is present at residues 454–456 (RGD).

This sequence belongs to the venom metalloproteinase (M12B) family. P-II subfamily. P-IIa sub-subfamily. As to quaternary structure, monomer (metalloprotease). It depends on Zn(2+) as a cofactor. The N-terminus is blocked. In terms of processing, not glycosylated. In terms of tissue distribution, expressed by the venom gland.

The protein localises to the secreted. With respect to regulation, inhibited by EDTA, and 1,10-phenanthroline, but not by PMSF. Functionally, non-hemorrhagic proteinase that activates prothrombin (F2) calcium-independently. Activates factor X (F10) and hydrolyzes the Aalpha-chain and more slowly the Bbeta-chain of fibrin and fibrinogen without affecting the gamma chain. It induces neither detachment nor apoptosis of human endothelial cells and is also not able to trigger an endothelial pro-inflammatory cell response. Nitric oxide and prostacyclin levels released by endothelial cells are significantly increased after treatment with insularinase A. Inhibits ADP-induced platelet aggregation (IC(50)=0.8 uM for native protein). Interestingly, inhibits the adhesion of HUVECs to immobilized fibrinogen at very low concentrations (IC(50)=36 nM). The sequence is that of Zinc metalloproteinase/disintegrin from Bothrops insularis (Golden lancehead).